The following is an 81-amino-acid chain: Small ribosomal subunit protein bS16 (81 aa).

This sequence belongs to the bacterial ribosomal protein bS16 family.

The sequence is that of Small ribosomal subunit protein bS16 from Clostridium beijerinckii (strain ATCC 51743 / NCIMB 8052) (Clostridium acetobutylicum).